The chain runs to 300 residues: Phosphatidylserine decarboxylase proenzyme (300 aa).

Residues aspartate 113, histidine 169, and serine 256 each act as charge relay system; for autoendoproteolytic cleavage activity in the active site. Serine 256 (schiff-base intermediate with substrate; via pyruvic acid; for decarboxylase activity) is an active-site residue. At serine 256 the chain carries Pyruvic acid (Ser); by autocatalysis.

This sequence belongs to the phosphatidylserine decarboxylase family. PSD-B subfamily. Prokaryotic type II sub-subfamily. As to quaternary structure, heterodimer of a large membrane-associated beta subunit and a small pyruvoyl-containing alpha subunit. Requires pyruvate as cofactor. Post-translationally, is synthesized initially as an inactive proenzyme. Formation of the active enzyme involves a self-maturation process in which the active site pyruvoyl group is generated from an internal serine residue via an autocatalytic post-translational modification. Two non-identical subunits are generated from the proenzyme in this reaction, and the pyruvate is formed at the N-terminus of the alpha chain, which is derived from the carboxyl end of the proenzyme. The autoendoproteolytic cleavage occurs by a canonical serine protease mechanism, in which the side chain hydroxyl group of the serine supplies its oxygen atom to form the C-terminus of the beta chain, while the remainder of the serine residue undergoes an oxidative deamination to produce ammonia and the pyruvoyl prosthetic group on the alpha chain. During this reaction, the Ser that is part of the protease active site of the proenzyme becomes the pyruvoyl prosthetic group, which constitutes an essential element of the active site of the mature decarboxylase.

Its subcellular location is the cell membrane. The enzyme catalyses a 1,2-diacyl-sn-glycero-3-phospho-L-serine + H(+) = a 1,2-diacyl-sn-glycero-3-phosphoethanolamine + CO2. Its pathway is phospholipid metabolism; phosphatidylethanolamine biosynthesis; phosphatidylethanolamine from CDP-diacylglycerol: step 2/2. Its function is as follows. Catalyzes the formation of phosphatidylethanolamine (PtdEtn) from phosphatidylserine (PtdSer). In Ruminiclostridium cellulolyticum (strain ATCC 35319 / DSM 5812 / JCM 6584 / H10) (Clostridium cellulolyticum), this protein is Phosphatidylserine decarboxylase proenzyme.